A 474-amino-acid chain; its full sequence is Glutamine synthetase (474 aa).

In terms of domain architecture, GS beta-grasp spans 15 to 99; the sequence is EDVQFIDVRF…MTFFIHDPIT (85 aa). The region spanning 107–474 is the GS catalytic domain; that stretch reads PRNIAKKAET…PYEFTLYYDI (368 aa). Residues glutamate 132 and glutamate 134 each coordinate Mg(2+). Glutamate 210 provides a ligand contact to ATP. The Mg(2+) site is built by glutamate 215 and glutamate 223. L-glutamate contacts are provided by residues 267–268 and glycine 268; that span reads NG. Histidine 272 lines the Mg(2+) pocket. ATP is bound by residues 274–276 and serine 276; that span reads HSS. L-glutamate-binding residues include arginine 325, glutamate 331, and arginine 343. Arginine 343, arginine 348, and lysine 357 together coordinate ATP. Glutamate 362 contributes to the Mg(2+) binding site. Arginine 364 is an L-glutamate binding site. Position 402 is an O-AMP-tyrosine (tyrosine 402).

The protein belongs to the glutamine synthetase family. In terms of assembly, oligomer of 12 subunits arranged in the form of two hexagons. It depends on Mg(2+) as a cofactor.

The protein resides in the cytoplasm. The enzyme catalyses L-glutamate + NH4(+) + ATP = L-glutamine + ADP + phosphate + H(+). The activity of this enzyme could be controlled by adenylation under conditions of abundant glutamine. In terms of biological role, catalyzes the ATP-dependent biosynthesis of glutamine from glutamate and ammonia. In Frankia alni, this protein is Glutamine synthetase.